The following is a 123-amino-acid chain: Small ribosomal subunit protein uS12 (123 aa).

The interval 1–25 (MPTINQLVRKPRKSRSALNKAPALQ) is disordered. A 3-methylthioaspartic acid modification is found at Asp-90.

Belongs to the universal ribosomal protein uS12 family. In terms of assembly, part of the 30S ribosomal subunit. Contacts proteins S8 and S17. May interact with IF1 in the 30S initiation complex.

Its function is as follows. With S4 and S5 plays an important role in translational accuracy. In terms of biological role, interacts with and stabilizes bases of the 16S rRNA that are involved in tRNA selection in the A site and with the mRNA backbone. Located at the interface of the 30S and 50S subunits, it traverses the body of the 30S subunit contacting proteins on the other side and probably holding the rRNA structure together. The combined cluster of proteins S8, S12 and S17 appears to hold together the shoulder and platform of the 30S subunit. This chain is Small ribosomal subunit protein uS12, found in Ehrlichia canis (strain Jake).